The following is a 282-amino-acid chain: Ribosomal RNA small subunit methyltransferase A (282 aa).

H15, L17, G42, E64, D89, and N109 together coordinate S-adenosyl-L-methionine.

It belongs to the class I-like SAM-binding methyltransferase superfamily. rRNA adenine N(6)-methyltransferase family. RsmA subfamily.

The protein resides in the cytoplasm. It catalyses the reaction adenosine(1518)/adenosine(1519) in 16S rRNA + 4 S-adenosyl-L-methionine = N(6)-dimethyladenosine(1518)/N(6)-dimethyladenosine(1519) in 16S rRNA + 4 S-adenosyl-L-homocysteine + 4 H(+). Its function is as follows. Specifically dimethylates two adjacent adenosines (A1518 and A1519) in the loop of a conserved hairpin near the 3'-end of 16S rRNA in the 30S particle. May play a critical role in biogenesis of 30S subunits. The protein is Ribosomal RNA small subunit methyltransferase A of Prochlorococcus marinus (strain MIT 9211).